Reading from the N-terminus, the 412-residue chain is Protein MITOFERRINLIKE 1, chloroplastic (412 aa).

The N-terminal 92 residues, 1 to 92 (MEARLSETLG…PGPEFLKWIK (92 aa)), are a transit peptide targeting the chloroplast. The tract at residues 43–83 (VRNPKLKTKSSQKPPKFSANFRRSDPPFASTSISDPTHEKP) is disordered. Solcar repeat units lie at residues 112–198 (ERAI…GKSL), 206–288 (PTVL…LKAA), and 298–392 (LEPL…ARLT). The next 6 membrane-spanning stretches (helical) occupy residues 115–135 (IIGA…LLPL), 167–187 (ILGF…SSAV), 208–228 (VLIP…IMVP), 262–282 (AGYS…YSSF), 303–323 (SVCC…PLDV), and 365–385 (TRGM…GYFA).

It belongs to the mitochondrial carrier (TC 2.A.29) family. In terms of tissue distribution, expressed in leaves, developing flowers and siliques.

It localises to the plastid. It is found in the chloroplast inner membrane. Functionally, probably involved in iron transport into chloroplasts. The polypeptide is Protein MITOFERRINLIKE 1, chloroplastic (MFL1) (Arabidopsis thaliana (Mouse-ear cress)).